A 112-amino-acid chain; its full sequence is ATP synthase epsilon chain (112 aa).

This sequence belongs to the ATPase epsilon chain family. F-type ATPases have 2 components, CF(1) - the catalytic core - and CF(0) - the membrane proton channel. CF(1) has five subunits: alpha(3), beta(3), gamma(1), delta(1), epsilon(1). CF(0) has three main subunits: a, b and c.

Its subcellular location is the cell inner membrane. Produces ATP from ADP in the presence of a proton gradient across the membrane. This Rickettsia conorii (strain ATCC VR-613 / Malish 7) protein is ATP synthase epsilon chain (atpC).